We begin with the raw amino-acid sequence, 714 residues long: BRCA1-associated RING domain protein 1 (714 aa).

Residues 25–63 form an RING-type zinc finger; the sequence is CPLCLKLLNRPVLLPCDHVFCDSCVHKSSQVESGCPVCK. 2 disordered regions span residues 106 to 165 and 254 to 283; these read YKND…QDWT and KAQN…DAME. The segment covering 118–134 has biased composition (basic and acidic residues); that stretch reads KHGESEDSEMTDKDVSK. Positions 135–147 are enriched in low complexity; it reads RSGGTDSSSRDGS. Composition is skewed to basic and acidic residues over residues 155–165 and 264–283; these read SDPRPKHQDWT and SHTE…DAME. Residues 331 to 382 form a C2HC pre-PHD-type zinc finger; it reads ITICGFCQSARVSEATGEMLHYSRGRPVDGDDIFRSNVIHVHSACIEWAPQV. A PHD-type zinc finger spans residues 402-451; sequence IKCTKCSLKGAALGCFVKSCRRSYHVPCAREISRCRWDYEDFLLLCPAHS. BRCT domains lie at 482–577 and 598–713; these read EQTP…PFEI and NKPK…HPVI.

Component of a DNA-protein complex on WUS and WOX5 promoters. Interacts with SYD. Forms heterodimer with BRCA1. Expressed in the shoot apical meristem (SAM), roots, flowers, embryos and seedlings. Mostly expressed in flowers and siliques, and, to a lower extent, in roots, rosette leaves, inflorescence and young cauline leaves.

The protein localises to the nucleus. Binds specifically to H3K4me3 regions of target genes (e.g. WUS and WOX5) promoters to repress their transcription via chromatin remodeling. Required for the shoot apical meristem (SAM) organization and maintenance, by confining WUS expression to the organizing center, and for the quiescent center (QC) development in the root apical meristem (RAM), by repressing WOX5 expression in the root proximal meristem. Plays a role in DNA repair and in cell-cycle control. Required for the repair of DNA double-strand breaks (DSBs), both natural and induced by genotoxic stress, by homologous recombination (HR). The chain is BRCA1-associated RING domain protein 1 from Arabidopsis thaliana (Mouse-ear cress).